We begin with the raw amino-acid sequence, 236 residues long: Leucyl/phenylalanyl-tRNA--protein transferase (236 aa).

This sequence belongs to the L/F-transferase family.

Its subcellular location is the cytoplasm. The catalysed reaction is N-terminal L-lysyl-[protein] + L-leucyl-tRNA(Leu) = N-terminal L-leucyl-L-lysyl-[protein] + tRNA(Leu) + H(+). It carries out the reaction N-terminal L-arginyl-[protein] + L-leucyl-tRNA(Leu) = N-terminal L-leucyl-L-arginyl-[protein] + tRNA(Leu) + H(+). It catalyses the reaction L-phenylalanyl-tRNA(Phe) + an N-terminal L-alpha-aminoacyl-[protein] = an N-terminal L-phenylalanyl-L-alpha-aminoacyl-[protein] + tRNA(Phe). In terms of biological role, functions in the N-end rule pathway of protein degradation where it conjugates Leu, Phe and, less efficiently, Met from aminoacyl-tRNAs to the N-termini of proteins containing an N-terminal arginine or lysine. This Yersinia pseudotuberculosis serotype O:1b (strain IP 31758) protein is Leucyl/phenylalanyl-tRNA--protein transferase.